The sequence spans 141 residues: Galactose-6-phosphate isomerase subunit LacA 1 (141 aa).

Belongs to the LacAB/RpiB family. As to quaternary structure, heteromultimeric protein consisting of LacA and LacB.

It catalyses the reaction aldehydo-D-galactose 6-phosphate = keto-D-tagatose 6-phosphate. It participates in carbohydrate metabolism; D-galactose 6-phosphate degradation; D-tagatose 6-phosphate from D-galactose 6-phosphate: step 1/1. This is Galactose-6-phosphate isomerase subunit LacA 1 from Streptococcus pyogenes serotype M1.